A 115-amino-acid polypeptide reads, in one-letter code: Thrombospondin type-1 domain-containing protein 8 (115 aa).

The first 21 residues, 1-21 (MARTPGALLLAPLLLLQLATP), serve as a signal peptide directing secretion. A TSP type-1 domain is found at 53–104 (DSILGPWGKWRCLCDLGKQERSREVVGTAPGPVFMDPEKLIQLRPCRQRDCP).

The chain is Thrombospondin type-1 domain-containing protein 8 from Homo sapiens (Human).